The primary structure comprises 362 residues: NAC domain-containing protein 5 (362 aa).

Residues 3 to 151 form the NAC domain; that stretch reads NPVGFRFRPT…TYTLCKVKFK (149 aa). A DNA-binding region spans residues 107-157; that stretch reads IGEKRVLVFKNHGGSKSDWAMHEYHATFSSPNQIMTYTLCKVKFKGERREF. The segment at 240–266 is disordered; it reads DDRNNHTPQKPLTGVFSDHSTDGSDSD.

The protein localises to the nucleus. In Arabidopsis thaliana (Mouse-ear cress), this protein is NAC domain-containing protein 5 (NAC005).